A 380-amino-acid polypeptide reads, in one-letter code: Cytochrome b (380 aa).

4 consecutive transmembrane segments (helical) span residues 34-54, 78-99, 114-134, and 179-199; these read FGSL…LLAT, WLIR…YLHI, WNTG…GYVL, and FFAL…IHLT. Heme b is bound by residues histidine 84 and histidine 98. Residues histidine 183 and histidine 197 each contribute to the heme b site. Position 202 (histidine 202) interacts with a ubiquinone. Transmembrane regions (helical) follow at residues 227-247, 289-309, 321-341, and 348-368; these read LKDI…ALFS, LGGV…PLLH, LSQL…WVGS, and FIII…LLFP.

Belongs to the cytochrome b family. As to quaternary structure, the cytochrome bc1 complex contains 11 subunits: 3 respiratory subunits (MT-CYB, CYC1 and UQCRFS1), 2 core proteins (UQCRC1 and UQCRC2) and 6 low-molecular weight proteins (UQCRH/QCR6, UQCRB/QCR7, UQCRQ/QCR8, UQCR10/QCR9, UQCR11/QCR10 and a cleavage product of UQCRFS1). This cytochrome bc1 complex then forms a dimer. It depends on heme b as a cofactor.

It localises to the mitochondrion inner membrane. In terms of biological role, component of the ubiquinol-cytochrome c reductase complex (complex III or cytochrome b-c1 complex) that is part of the mitochondrial respiratory chain. The b-c1 complex mediates electron transfer from ubiquinol to cytochrome c. Contributes to the generation of a proton gradient across the mitochondrial membrane that is then used for ATP synthesis. The chain is Cytochrome b (MT-CYB) from Cepphus grylle (Black guillemot).